The sequence spans 264 residues: Methionine aminopeptidase (264 aa).

His79 provides a ligand contact to substrate. A divalent metal cation is bound by residues Asp97, Asp108, and His171. His178 contributes to the substrate binding site. Positions 204 and 235 each coordinate a divalent metal cation.

Belongs to the peptidase M24A family. Methionine aminopeptidase type 1 subfamily. As to quaternary structure, monomer. Co(2+) serves as cofactor. The cofactor is Zn(2+). Mn(2+) is required as a cofactor. Requires Fe(2+) as cofactor.

The catalysed reaction is Release of N-terminal amino acids, preferentially methionine, from peptides and arylamides.. Removes the N-terminal methionine from nascent proteins. The N-terminal methionine is often cleaved when the second residue in the primary sequence is small and uncharged (Met-Ala-, Cys, Gly, Pro, Ser, Thr, or Val). Requires deformylation of the N(alpha)-formylated initiator methionine before it can be hydrolyzed. The sequence is that of Methionine aminopeptidase from Escherichia coli O157:H7.